We begin with the raw amino-acid sequence, 868 residues long: Lysosomal cholesterol signaling protein (868 aa).

Over 1–36 the chain is Lumenal; it reads MDSYFSAKNSTLAGDMNATWPASHGFNATGDPPSMS. The segment at 1–368 is PIN-like transporter; that stretch reads MDSYFSAKNS…SAWLLTFPTM (368 aa). Asparagine 9, asparagine 17, and asparagine 27 each carry an N-linked (GlcNAc...) asparagine glycan. Residues 37 to 57 form a helical membrane-spanning segment; it reads ITRLFPALLECFGIVLCGYIA. Cholesterol contacts are provided by phenylalanine 41 and tyrosine 55. Residues 58–77 lie on the Cytoplasmic side of the membrane; the sequence is GRANIITSTQAKGLGNFVSR. Residues 78 to 98 traverse the membrane as a helical segment; sequence FALPALLFKNMVVLNFSNVDW. The Lumenal segment spans residues 99–102; it reads AFLY. The chain crosses the membrane as a helical span at residues 103–123; it reads SVLIGKASVFFIVCVLTLLVA. Residues 124–131 lie on the Cytoplasmic side of the membrane; the sequence is SPESRFSK. Residues 132–152 traverse the membrane as a discontinuously helical segment; that stretch reads AGLFPIFATQSNDFALGYPIV. The Lumenal segment spans residues 153–165; sequence EALYQSTYPEYLQ. The chain crosses the membrane as a helical span at residues 166 to 186; the sequence is YIYLVAPISLMMLNPIGFIFC. At 187–211 the chain is on the cytoplasmic side; the sequence is EIQKSKDTQNASQNKAKIVGLGFLR. A discontinuously helical transmembrane segment spans residues 212-232; the sequence is VLQNPIVFMVFVGIAFNFILD. Residues 233-241 lie on the Lumenal side of the membrane; the sequence is KKIPVYMEN. Residues 242-262 traverse the membrane as a discontinuously helical segment; sequence FLDGLANSFSGSALFYLGLTM. The Cytoplasmic segment spans residues 263–271; that stretch reads VGKIRRLKK. Residues glycine 264, lysine 265, and isoleucine 266 each coordinate cholesterol. A helical membrane pass occupies residues 272–292; sequence SAFVVLTLLITAKLLVLPLLC. Topologically, residues 293–313 are lumenal; it reads REMVELLDKGDSVVNHTSLSN. Asparagine 307 carries an N-linked (GlcNAc...) asparagine glycan. The chain crosses the membrane as a discontinuously helical span at residues 314–334; it reads YAFLYGVFPVAPGVAIFATQF. Topologically, residues 335–344 are cytoplasmic; the sequence is NMEVEIITSG. Residues 345–365 form a helical membrane-spanning segment; it reads MVISTFVSAPIMYVSAWLLTF. The Lumenal segment spans residues 366–379; sequence PTMDAKPLAYAIQN. Residues 378 to 715 form a GPCR region; that stretch reads QNVSFDISII…FGIFGLDKHL (338 aa). Asparagine 379 is a glycosylation site (N-linked (GlcNAc...) asparagine). Residues 380-400 traverse the membrane as a helical segment; that stretch reads VSFDISIISLVSLIWSLSILL. Residues 401 to 412 are Cytoplasmic-facing; sequence LSKKYKQLPHML. Residues 413–433 form a helical membrane-spanning segment; the sequence is TANLLIAQTIVCAGMMIWNFV. The Lumenal portion of the chain corresponds to 434–436; sequence KEK. A helical membrane pass occupies residues 437–457; that stretch reads NFVGQILVFVLLYSSLYSTYL. Over 458-478 the chain is Cytoplasmic; the sequence is WTGLLAVSLFLLKKRESVQLP. Residues 479 to 499 form a helical membrane-spanning segment; the sequence is VGIIIISGWGIPALLVGVLLI. Residues 500 to 518 lie on the Lumenal side of the membrane; it reads TGKHNGDSIDSAFFYGKEQ. The chain crosses the membrane as a helical span at residues 519–539; sequence MITTAVTLFCSILIAGVSLMC. Topologically, residues 540–658 are cytoplasmic; the sequence is MNRTTQAGHY…GDPQLTRHVL (119 aa). Residues 550 to 582 form a disordered region; the sequence is EGFGQSQNHKPVEPGSTAFEENPAPTNEPELFP. Arginine 655 is a cholesterol binding site. Residues 659 to 679 traverse the membrane as a helical segment; sequence LCLLLIIGLFANLSSCLWWLF. Residues 680–689 are Lumenal-facing; that stretch reads NHETGRLYVE. Residues 690-710 form a helical membrane-spanning segment; sequence LQFFCAVFNFGQGFISFGIFG. Topologically, residues 711–868 are cytoplasmic; the sequence is LDKHLIILPF…SSPPSVSPKT (158 aa). Residues 755–833 form the DEP domain; that stretch reads YHRDLCIRNI…DEYLFYRFLQ (79 aa). The tract at residues 836–868 is disordered; the sequence is PEQSPPARTLRDHQEESYKEIGHSSPPSVSPKT. The span at 844-857 shows a compositional bias: basic and acidic residues; sequence TLRDHQEESYKEIG.

In terms of assembly, homodimer; via the transporter region and DEP domain. Interacts with the GATOR1 complex; preventing interaction between GATOR1 and KICSTOR; interaction is disrupted upon cholesterol starvation. In terms of tissue distribution, widely expressed in adult tissues and during development. In brain, widely distributed in forebrain regions, while it shows a more restricted distribution in the midbrain and hindbrain regions. Expressed at highest level in the lateral part of striatum and hippocampus.

It is found in the lysosome membrane. Functionally, cholesterol-binding protein that acts as a regulator of mTORC1 signaling pathway. Acts as a sensor of cholesterol to signal cholesterol sufficiency to mTORC1: in presence of cholesterol, binds cholesterol, leading to disruption of the interaction between the GATOR1 and KICSTOR complexes and promotion of mTORC1 signaling. Upon cholesterol starvation, GPR155/LYCHOS is unable to perturb the association between GATOR1 and KICSTOR, leading to mTORC1 signaling inhibition. Binds indole-3-acetic acid and may play a role in tryptophan metabolism. The protein is Lysosomal cholesterol signaling protein of Mus musculus (Mouse).